We begin with the raw amino-acid sequence, 425 residues long: Serine--tRNA ligase (425 aa).

An L-serine-binding site is contributed by Thr231–Glu233. Arg262–Glu264 contacts ATP. Glu285 contributes to the L-serine binding site. ATP is bound at residue Glu349–Ser352. Position 385 (Ser385) interacts with L-serine.

It belongs to the class-II aminoacyl-tRNA synthetase family. Type-1 seryl-tRNA synthetase subfamily. Homodimer. The tRNA molecule binds across the dimer.

It localises to the cytoplasm. It catalyses the reaction tRNA(Ser) + L-serine + ATP = L-seryl-tRNA(Ser) + AMP + diphosphate + H(+). The enzyme catalyses tRNA(Sec) + L-serine + ATP = L-seryl-tRNA(Sec) + AMP + diphosphate + H(+). Its pathway is aminoacyl-tRNA biosynthesis; selenocysteinyl-tRNA(Sec) biosynthesis; L-seryl-tRNA(Sec) from L-serine and tRNA(Sec): step 1/1. Its function is as follows. Catalyzes the attachment of serine to tRNA(Ser). Is also able to aminoacylate tRNA(Sec) with serine, to form the misacylated tRNA L-seryl-tRNA(Sec), which will be further converted into selenocysteinyl-tRNA(Sec). The sequence is that of Serine--tRNA ligase from Alkaliphilus oremlandii (strain OhILAs) (Clostridium oremlandii (strain OhILAs)).